Consider the following 196-residue polypeptide: Protein GrpE (196 aa).

The segment at 1–40 is disordered; that stretch reads MSSKEQKTPEGQAPEEIIMDQHEEVEAVEPNDSAEQVDPR.

The protein belongs to the GrpE family. Homodimer.

It is found in the cytoplasm. Functionally, participates actively in the response to hyperosmotic and heat shock by preventing the aggregation of stress-denatured proteins, in association with DnaK and GrpE. It is the nucleotide exchange factor for DnaK and may function as a thermosensor. Unfolded proteins bind initially to DnaJ; upon interaction with the DnaJ-bound protein, DnaK hydrolyzes its bound ATP, resulting in the formation of a stable complex. GrpE releases ADP from DnaK; ATP binding to DnaK triggers the release of the substrate protein, thus completing the reaction cycle. Several rounds of ATP-dependent interactions between DnaJ, DnaK and GrpE are required for fully efficient folding. The protein is Protein GrpE of Salmonella gallinarum (strain 287/91 / NCTC 13346).